Reading from the N-terminus, the 393-residue chain is Glutamyl-tRNA reductase (393 aa).

Substrate is bound by residues 47–50 (TCSR), Ser98, 103–105 (ETD), and Gln109. Cys48 acts as the Nucleophile in catalysis. Residue 177-182 (GAGAVG) coordinates NADP(+).

The protein belongs to the glutamyl-tRNA reductase family. In terms of assembly, homodimer.

The catalysed reaction is (S)-4-amino-5-oxopentanoate + tRNA(Glu) + NADP(+) = L-glutamyl-tRNA(Glu) + NADPH + H(+). Its pathway is porphyrin-containing compound metabolism; protoporphyrin-IX biosynthesis; 5-aminolevulinate from L-glutamyl-tRNA(Glu): step 1/2. Functionally, catalyzes the NADPH-dependent reduction of glutamyl-tRNA(Glu) to glutamate 1-semialdehyde (GSA). This Pyrobaculum neutrophilum (strain DSM 2338 / JCM 9278 / NBRC 100436 / V24Sta) (Thermoproteus neutrophilus) protein is Glutamyl-tRNA reductase.